The following is a 452-amino-acid chain: Putative zinc metalloprotease VC_2253 (452 aa).

Residue His-22 participates in Zn(2+) binding. Residue Glu-23 is part of the active site. His-26 lines the Zn(2+) pocket. A helical transmembrane segment spans residues 98 to 120 (SAIVSAGPIFNFLFAIFAYWLVF). Positions 197–292 (NLRDWNFDPE…QVELTLIPDS (96 aa)) constitute a PDZ domain. The next 2 membrane-spanning stretches (helical) occupy residues 378-400 (FVYFLGFLALISINLGIINLVPL) and 428-447 (MGYRIGGAIIFSLMAVAIFN).

This sequence belongs to the peptidase M50B family. The cofactor is Zn(2+).

It is found in the cell inner membrane. The sequence is that of Putative zinc metalloprotease VC_2253 from Vibrio cholerae serotype O1 (strain ATCC 39315 / El Tor Inaba N16961).